Here is a 626-residue protein sequence, read N- to C-terminus: MNVAASQQPTPATVASRGRSAAPERMTGAKAIVRSLEELNADIVFGIPGGAVLPVYDPLYSSTKVRHVLVRHEQGAGHAATGYAQVTGRVGVCIATSGPGATNLVTPIADANLDSVPMVAITGQVGSGLLGTDAFQEADIRGITMPVTKHNFMVTNPNDIPQALAEAFHLAITGRPGPVLVDIPKDVQNAELDFVWPPKIDLPGYRPVSTPHARQIEQAVKLIGEAKKPVLYVGGGVIKADAHEELRAFAEYTGIPVVTTLMALGTFPESHELHMGMPGMHGTVSAVGALQRSDLLIAIGSRFDDRVTGDVDTFAPDAKIIHADIDPAEIGKIKQVEVPIVGDAREVLARLLETTKASKAETEDISEWVDYLKGLKARFPRGYDEQPGDLLAPQFVIETLSKEVGPDAIYCAGVGQHQMWAAQFVDFEKPRTWLNSGGLGTMGYAVPAALGAKAGAPDKEVWAIDGDGCFQMTNQELTTAAVEGFPIKIALINNGNLGMVRQWQTLFYEGRYSNTKLRNQGEYMPDFVTLSEGLGCVAIRVTKAEEVLPAIQKAREINDRPVVIDFIVGEDAQVWPMVSAGSSNSDIQYALGLRPFFDGDESAAEDPADIHEAVSDIDAAVESTEA.

Positions 1–13 are enriched in polar residues; that stretch reads MNVAASQQPTPAT. The interval 1–23 is disordered; the sequence is MNVAASQQPTPATVASRGRSAAP. Thiamine diphosphate is bound at residue glutamate 73. Residues arginine 175, 281–302, and 324–343 contribute to the FAD site; these read HGTV…IGSR and DIDP…IVGD. Residues 416–496 form a thiamine pyrophosphate binding region; sequence QHQMWAAQFV…IKIALINNGN (81 aa). Mg(2+)-binding residues include aspartate 467 and asparagine 494.

The protein belongs to the TPP enzyme family. As to quaternary structure, dimer of large and small chains. Mg(2+) is required as a cofactor. Requires thiamine diphosphate as cofactor.

It catalyses the reaction 2 pyruvate + H(+) = (2S)-2-acetolactate + CO2. It participates in amino-acid biosynthesis; L-isoleucine biosynthesis; L-isoleucine from 2-oxobutanoate: step 1/4. The protein operates within amino-acid biosynthesis; L-valine biosynthesis; L-valine from pyruvate: step 1/4. The polypeptide is Acetolactate synthase large subunit (ilvB) (Corynebacterium glutamicum (strain ATCC 13032 / DSM 20300 / JCM 1318 / BCRC 11384 / CCUG 27702 / LMG 3730 / NBRC 12168 / NCIMB 10025 / NRRL B-2784 / 534)).